The primary structure comprises 257 residues: Type III pantothenate kinase (257 aa).

Position 6-13 (6-13 (DVGNTNTV)) interacts with ATP. Residues Tyr102 and 109–112 (GADR) contribute to the substrate site. The active-site Proton acceptor is Asp111. Residue Asp131 participates in K(+) binding. Thr134 provides a ligand contact to ATP. Thr186 serves as a coordination point for substrate.

Belongs to the type III pantothenate kinase family. As to quaternary structure, homodimer. It depends on NH4(+) as a cofactor. Requires K(+) as cofactor.

The protein resides in the cytoplasm. It carries out the reaction (R)-pantothenate + ATP = (R)-4'-phosphopantothenate + ADP + H(+). The protein operates within cofactor biosynthesis; coenzyme A biosynthesis; CoA from (R)-pantothenate: step 1/5. Catalyzes the phosphorylation of pantothenate (Pan), the first step in CoA biosynthesis. The chain is Type III pantothenate kinase from Leptospira interrogans serogroup Icterohaemorrhagiae serovar copenhageni (strain Fiocruz L1-130).